Here is a 42-residue protein sequence, read N- to C-terminus: MYLAVVPVCCSFPWAGVGLRCSRLSVRVLELSDSVRGGGIHA.

This is an uncharacterized protein from Treponema pallidum (strain Nichols).